Reading from the N-terminus, the 485-residue chain is GTPase Obg (485 aa).

One can recognise an Obg domain in the interval 1–159 (MKFVDEVRIF…LTLRLELKLL (159 aa)). The region spanning 160-332 (ADVGLLGFPN…LMDSVAEVLF (173 aa)) is the OBG-type G domain. GTP is bound by residues 166–173 (GFPNAGKS), 191–195 (FTTLV), 213–216 (DIPG), 284–287 (NKLD), and 313–315 (SCA). Positions 173 and 193 each coordinate Mg(2+). Low complexity-rich tracts occupy residues 367-385 (AGAA…AAKK), 394-428 (RKAG…PVKK), 437-446 (RKSGTAPAKK), and 455-474 (RKSG…ATKR). A disordered region spans residues 367–485 (AGAAAATKSA…PARKSGGGRS (119 aa)).

The protein belongs to the TRAFAC class OBG-HflX-like GTPase superfamily. OBG GTPase family. In terms of assembly, monomer. The cofactor is Mg(2+).

It localises to the cytoplasm. Functionally, an essential GTPase which binds GTP, GDP and possibly (p)ppGpp with moderate affinity, with high nucleotide exchange rates and a fairly low GTP hydrolysis rate. Plays a role in control of the cell cycle, stress response, ribosome biogenesis and in those bacteria that undergo differentiation, in morphogenesis control. The sequence is that of GTPase Obg from Myxococcus xanthus (strain DK1622).